The chain runs to 349 residues: FK506-binding protein-like (349 aa).

T3 is subject to Phosphothreonine. The interval 36 to 55 (RQQPRDPPTETLELEVSPDP) is disordered. TPR repeat units follow at residues 210–243 (AREE…LLTL), 252–285 (TVLH…EPGH), and 286–319 (LKAL…DPKN).

Forms a ternary complex with CDKN1A/p21 and HSP90AB1/Hsp90. As to expression, ubiquitously expressed with higher levels in testis.

Its function is as follows. May be involved in response to X-ray. Regulates p21 protein stability by binding to Hsp90 and p21. The sequence is that of FK506-binding protein-like (FKBPL) from Homo sapiens (Human).